The following is a 357-amino-acid chain: Non-structural protein NS2 (357 aa).

Disordered stretches follow at residues P169–K191 and D229–T266. Positions E233–S249 are enriched in basic and acidic residues. Over residues D250–D260 the composition is skewed to acidic residues.

This sequence belongs to the orbivirus non-structural protein NS2 family.

Functionally, single-stranded RNA-binding protein. The protein is Non-structural protein NS2 (Segment-8) of Antilocapra americana (Pronghorn).